A 430-amino-acid chain; its full sequence is Tol-Pal system protein TolB (430 aa).

The N-terminal stretch at 1–21 (MKQAFRVALGFLVLWASVLHA) is a signal peptide.

Belongs to the TolB family. In terms of assembly, the Tol-Pal system is composed of five core proteins: the inner membrane proteins TolA, TolQ and TolR, the periplasmic protein TolB and the outer membrane protein Pal. They form a network linking the inner and outer membranes and the peptidoglycan layer.

Its subcellular location is the periplasm. In terms of biological role, part of the Tol-Pal system, which plays a role in outer membrane invagination during cell division and is important for maintaining outer membrane integrity. TolB occupies a key intermediary position in the Tol-Pal system because it communicates directly with both membrane-embedded components, Pal in the outer membrane and TolA in the inner membrane. This Yersinia pestis protein is Tol-Pal system protein TolB.